Here is a 747-residue protein sequence, read N- to C-terminus: Potassium transporter 20 (747 aa).

Over 1–47 (MSVQEDDDAAGPEVDRLRRHDSFYGDAEKVSNDKSHGTGENWARTLQ) the chain is Cytoplasmic. Residues 48–68 (LAFQSIGVVYGDVGTSPLYVY) traverse the membrane as a helical segment. Topologically, residues 69–84 (SSTFPDGVKHPDDLVG) are extracellular. Residues 85–105 (VLSLMLYTLILIPMVKYVFIV) traverse the membrane as a helical segment. The Cytoplasmic portion of the chain corresponds to 106-171 (LYANDNGDGG…QKLESSNAAK (66 aa)). Residues 172 to 192 (IALFTITILGTSMVMGDGTLT) traverse the membrane as a helical segment. The Extracellular portion of the chain corresponds to 193–209 (PAISVLSAVSGIREKAP). Residues 210-230 (SLTQLQVVWISVPILIVLFSV) form a helical membrane-spanning segment. At 231–237 (QRFGTDK) the chain is on the cytoplasmic side. A helical membrane pass occupies residues 238–258 (VGYSFAPVISVWFVLIAGIGA). Topologically, residues 259–288 (YNLAVHEITILRAFNPMYIIDYFRRNGKEA) are extracellular. A helical membrane pass occupies residues 289-309 (WVSLGGAVLCITGTEAMFADL). Over 310 to 318 (GHFNIRAIQ) the chain is Cytoplasmic. Residues 319 to 339 (LSFTCVLFPSVALCYMGQAAY) form a helical membrane-spanning segment. The Extracellular portion of the chain corresponds to 340–353 (LRKFPEDVGDTFYK). Residues 354 to 374 (SLPAPLFWPVFVVAIMAAIIA) form a helical membrane-spanning segment. The Cytoplasmic segment spans residues 375 to 410 (SQAMLSGAFAILSKALPLGCFPRVEVVHTSNKYEGQ). The chain crosses the membrane as a helical span at residues 411-431 (VYIPEVNFLIGVASVAITVAF). Topologically, residues 432-442 (QTTANIGNAYG) are extracellular. Residues 443–463 (ICVVMVFSITTHLMTVVMLLI) form a helical membrane-spanning segment. Topologically, residues 464-469 (WKVRLP) are cytoplasmic. The helical transmembrane segment at 470–490 (FIAAFYVVFTFTEFLYLSSIL) threads the bilayer. Residues 491-496 (SKFAEG) lie on the Extracellular side of the membrane. The helical transmembrane segment at 497-517 (GYLPFCFSLVLMALMATWHYV) threads the bilayer. Residues 518–747 (HVKRYWYELD…LLKVGITYEI (230 aa)) are Cytoplasmic-facing.

The protein belongs to the HAK/KUP transporter (TC 2.A.72.3) family.

It localises to the membrane. In terms of biological role, high-affinity potassium transporter. The protein is Potassium transporter 20 (HAK20) of Oryza sativa subsp. japonica (Rice).